We begin with the raw amino-acid sequence, 887 residues long: Alanine--tRNA ligase (887 aa).

Zn(2+) contacts are provided by H581, H585, C683, and H687.

It belongs to the class-II aminoacyl-tRNA synthetase family. Zn(2+) is required as a cofactor.

It localises to the cytoplasm. It catalyses the reaction tRNA(Ala) + L-alanine + ATP = L-alanyl-tRNA(Ala) + AMP + diphosphate. In terms of biological role, catalyzes the attachment of alanine to tRNA(Ala) in a two-step reaction: alanine is first activated by ATP to form Ala-AMP and then transferred to the acceptor end of tRNA(Ala). Also edits incorrectly charged Ser-tRNA(Ala) and Gly-tRNA(Ala) via its editing domain. The protein is Alanine--tRNA ligase of Ehrlichia canis (strain Jake).